The chain runs to 347 residues: Dihydroorotase (347 aa).

Residues H13 and H15 each contribute to the Zn(2+) site. Substrate is bound by residues 15–17 (HLR) and N41. 3 residues coordinate Zn(2+): K99, H136, and H174. Residue K99 is modified to N6-carboxylysine. Position 136 (H136) interacts with substrate. L219 contributes to the substrate binding site. D247 is a binding site for Zn(2+). Residue D247 is part of the active site. Residues H251 and A263 each coordinate substrate.

Belongs to the metallo-dependent hydrolases superfamily. DHOase family. Class II DHOase subfamily. Homodimer. Zn(2+) is required as a cofactor.

The catalysed reaction is (S)-dihydroorotate + H2O = N-carbamoyl-L-aspartate + H(+). Its pathway is pyrimidine metabolism; UMP biosynthesis via de novo pathway; (S)-dihydroorotate from bicarbonate: step 3/3. In terms of biological role, catalyzes the reversible cyclization of carbamoyl aspartate to dihydroorotate. The protein is Dihydroorotase of Rhizobium meliloti (strain 1021) (Ensifer meliloti).